Consider the following 594-residue polypeptide: Type IV inositol polyphosphate 5-phosphatase 7 (594 aa).

The disordered stretch occupies residues 246–300 (FRCGHRPSDYSRRPSDYSRPSDYYSRPSNYSRPSDVSRWGSSDDDNGPGDSPSTF). A compositionally biased stretch (basic and acidic residues) spans 251–261 (RPSDYSRRPSD). Low complexity predominate over residues 262–279 (YSRPSDYYSRPSNYSRPS). Catalytic regions lie at residues 435–450 (DRVI…IALS) and 515–530 (KRRT…WHGE).

This sequence belongs to the inositol polyphosphate 5-phosphatase family. Broadly expressed in emerging organs. Mostly localized in procambium of growing organs. Restricted to vascular differentiating cells of young organs.

The protein resides in the nucleus. Its subcellular location is the cell membrane. The enzyme catalyses a 1,2-diacyl-sn-glycero-3-phospho-(1D-myo-inositol-4,5-bisphosphate) + H2O = a 1,2-diacyl-sn-glycero-3-phospho-(1D-myo-inositol 4-phosphate) + phosphate. It carries out the reaction a 1,2-diacyl-sn-glycero-3-phospho-(1D-myo-inositol-3,4,5-trisphosphate) + H2O = a 1,2-diacyl-sn-glycero-3-phospho-(1D-myo-inositol-3,4-bisphosphate) + phosphate. Has phosphatase activity toward PtdIns(4,5)P2 and at a lower extent toward PtdIns(3,4,5)P3 but not toward Ins(1,4,5)P3. Acts redundantly with CVP2 for maintaining vascular continuity. Regulates phosphoinositide-dependent VAN3 localization. Functions in salt stress response by regulating reactive oxygen species (ROS) production and stress-responsive genes expression. This chain is Type IV inositol polyphosphate 5-phosphatase 7, found in Arabidopsis thaliana (Mouse-ear cress).